Here is a 207-residue protein sequence, read N- to C-terminus: Arginine exporter protein ArgO (207 aa).

A run of 6 helical transmembrane segments spans residues 1 to 21, 42 to 62, 67 to 87, 111 to 131, 150 to 170, and 185 to 205; these read MLSTFVQGFFLSAAMILPLGP, LCAISDGFLIGVGVFGGSALL, LLLQFVTWGGVAFLFWYGWGA, VVAIIFAVTWLNPHVYLDTIV, FGAASASVSWFFSLSLLAAWF, and GFICIIMWYIAWQLAKQGLLI.

This sequence belongs to the LysE/ArgO transporter (TC 2.A.75) family.

Its subcellular location is the cell inner membrane. The enzyme catalyses L-arginine(in) = L-arginine(out). In terms of biological role, involved in the export of arginine. Important to control the intracellular level of arginine and the correct balance between arginine and lysine. The polypeptide is Arginine exporter protein ArgO (Photorhabdus laumondii subsp. laumondii (strain DSM 15139 / CIP 105565 / TT01) (Photorhabdus luminescens subsp. laumondii)).